Reading from the N-terminus, the 60-residue chain is Large ribosomal subunit protein uL30 (60 aa).

The protein belongs to the universal ribosomal protein uL30 family. As to quaternary structure, part of the 50S ribosomal subunit.

This Leuconostoc citreum (strain KM20) protein is Large ribosomal subunit protein uL30.